The sequence spans 151 residues: Small ribosomal subunit protein uS15z (151 aa).

The protein belongs to the universal ribosomal protein uS15 family.

The polypeptide is Small ribosomal subunit protein uS15z (RPS13A) (Arabidopsis thaliana (Mouse-ear cress)).